The sequence spans 289 residues: ATP synthase gamma chain (289 aa).

Belongs to the ATPase gamma chain family. F-type ATPases have 2 components, CF(1) - the catalytic core - and CF(0) - the membrane proton channel. CF(1) has five subunits: alpha(3), beta(3), gamma(1), delta(1), epsilon(1). CF(0) has three main subunits: a, b and c.

The protein localises to the cell inner membrane. Functionally, produces ATP from ADP in the presence of a proton gradient across the membrane. The gamma chain is believed to be important in regulating ATPase activity and the flow of protons through the CF(0) complex. This chain is ATP synthase gamma chain, found in Phocaeicola vulgatus (strain ATCC 8482 / DSM 1447 / JCM 5826 / CCUG 4940 / NBRC 14291 / NCTC 11154) (Bacteroides vulgatus).